A 2476-amino-acid polypeptide reads, in one-letter code: Non-reducing polyketide synthase pkdA (2476 aa).

Residues 22–230 (PNLNDAYLQS…VISEARLATL (209 aa)) form an N-terminal acylcarrier protein transacylase domain (SAT) region. Residue Cys-142 is the Nucleophile; for transacylase activity of the active site. His-261 (proton donor/acceptor; for transacylase activity) is an active-site residue. The Ketosynthase family 3 (KS3) domain maps to 388 to 805 (DESIAVVGMA…GSNASLVVTQ (418 aa)). Catalysis depends on for beta-ketoacyl synthase activity residues Cys-554, His-689, and His-728. The segment at 919–1204 (FGGQRSSFVG…GSGVTNLASR (286 aa)) is malonyl-CoA:ACP transacylase (MAT). The N-terminal hotdog fold stretch occupies residues 1290–1417 (QKGLWTFVGY…GRITFQTPKQ (128 aa)). The region spanning 1290–1592 (QKGLWTFVGY…FVEVSIAGMS (303 aa)) is the PKS/mFAS DH domain. Residues 1321–1590 (YVSAHVIAQT…LHFVEVSIAG (270 aa)) are product template (PT) domain. His-1325 acts as the Proton acceptor; for dehydratase activity in catalysis. Residues 1445–1592 (QTIQGSRNIY…FVEVSIAGMS (148 aa)) are C-terminal hotdog fold. Asp-1501 acts as the Proton donor; for dehydratase activity in catalysis. A disordered region spans residues 1626-1649 (DVSKNEKDAKAPSKKKESTSKSPG). The 75-residue stretch at 1650-1724 (HDILARVRTL…SLVKCIGANM (75 aa)) folds into the Carrier domain. The residue at position 1684 (Ser-1684) is an O-(pantetheine 4'-phosphoryl)serine. Residues 1727-1766 (SDTSRTGDDSSDDLETASAESETSSGINNEDSHNIDRQQI) form a disordered region. The segment covering 1742–1751 (TASAESETSS) has biased composition (low complexity). Residues 1881-2030 (ELLRQYPEHA…DCEKTPSSHL (150 aa)) are methyltransferase (CMeT) domain. The tract at residues 2094-2340 (VTGATGSLGS…SWCPVDDVAA (247 aa)) is NADPH-binding domain.

It depends on pantetheine 4'-phosphate as a cofactor.

The enzyme catalyses propanoyl-CoA + 3 malonyl-CoA + AH2 + 2 S-adenosyl-L-methionine + H(+) = 2-ethyl-4,6-dihydroxy-3,5-dimethylbenzaldehyde + A + 2 S-adenosyl-L-homocysteine + 3 CO2 + 4 CoA + H2O. It functions in the pathway secondary metabolite biosynthesis. Non-reducing polyketide synthase that synthesizes 6-ethyl-2,4-dihydroxy-3,5-dimethylbenzaldehyde via condensation of one propanoyl-CoA starter unit with 3 malonyl-CoA units, as well as 2 methylation steps. In Emericella nidulans (strain FGSC A4 / ATCC 38163 / CBS 112.46 / NRRL 194 / M139) (Aspergillus nidulans), this protein is Non-reducing polyketide synthase pkdA.